The following is a 229-amino-acid chain: Sperm-associated microtubule inner protein 5 (229 aa).

A disordered region spans residues 181–201; that stretch reads PEFSGPGQTPPSEDPQAPRPC.

In terms of assembly, microtubule inner protein component of sperm flagellar doublet microtubules. Expressed in testis (at protein level).

The protein localises to the cytoplasm. The protein resides in the cytoskeleton. Its subcellular location is the flagellum axoneme. It is found in the nucleus. Functionally, microtubule inner protein (MIP) part of the dynein-decorated doublet microtubules (DMTs) in flagellum axoneme. May serve to reinforce and thus stabilize the microtubule structure in the sperm flagella. This Mus musculus (Mouse) protein is Sperm-associated microtubule inner protein 5 (Spmip5).